Reading from the N-terminus, the 30-residue chain is Beta/omega-theraphotoxin-Tp2a (30 aa).

3 cysteine pairs are disulfide-bonded: cysteine 2-cysteine 16, cysteine 9-cysteine 21, and cysteine 15-cysteine 25. Residues 26–30 are flexible tail region important for ability to inhibit Nav channel; sequence KKKLW. Residues 29 to 30 form a hydrophobic dyad that anchors the toxin into the membrane while positioning it over the S3 helix of Nav1.7/SCN9A region; it reads LW.

Belongs to the neurotoxin 30 (phrixotoxin) family. Expressed by the venom gland.

Its subcellular location is the secreted. In terms of biological role, gating-modifier toxin that targets voltage-gated sodium channels with a selective activity on Nav1.7/SCN9A (IC(50)=1-1.5 nM). It inhibits both activation and inactivation. For inhibition of activation, it is 100-fold more selective for Nav1.7/SCN9A (IC(50)=0.26-3) than for other sodium channels (Nav1.2/SCN2A (IC(50)=40-540 nM), Nav1.3/SCN3A (IC(50)=102 nM), Nav1.4/SCN4A (IC(50)=30-39 nM), Nav1.5/SCN5A (IC(50)=19-90 nM), Nav1.6/SCN8A (IC(50)=26 nM), and Nav1.8/SCN10A (IC(50)=146 nM)). For inhibition of inactivation, it is 20-fold more potent in inhibiting inactivation on Nav1.7/SCN9A (IC(50)=250 nM) than other channels (about 4.6 uM for all channels). It also weakly inhibits Cav1.2/CACNA1C and Cav3.2/CACNA1H (29% block at 1 uM). It inhibits Nav1.7/SCN9A activation by interacting with DII and impairs Nav1.7/SCN9A inactivation by interacting with DIV. It docks on top of the DII S3 helix Nav1.7/SCN9A. It is about 60-fold less active on Nav1.7/SCN9A at depolarized potential (0 mV; IC(50)=15 nM), compared to -120 mV potential (IC(50)=0.26 nM). This toxin binds to lipid membrane. This ability correlates with hNav1.7/SCN9A inhibition, showing that membrane binding is the first step in the inhibitory mechanism of this toxin. It inhibits Nav1.2/SCN2A less potently when it is coexpressed with SCN2B or SCN4B than when it is expressed alone, showing that beta subunits (SCN2B and SCN4B) have a protective effect. This Thrixopelma pruriens (Peruvian green velvet tarantula) protein is Beta/omega-theraphotoxin-Tp2a.